The chain runs to 32 residues: Cytochrome b6-f complex subunit 7 (32 aa).

The helical transmembrane segment at 5 to 25 threads the bilayer; it reads IFGTAAIFWVLIPIGLVGGAL.

It belongs to the PetM family. As to quaternary structure, the 4 large subunits of the cytochrome b6-f complex are cytochrome b6, subunit IV (17 kDa polypeptide, PetD), cytochrome f and the Rieske protein, while the 4 small subunits are PetG, PetL, PetM and PetN. The complex functions as a dimer.

It localises to the cellular thylakoid membrane. In terms of biological role, component of the cytochrome b6-f complex, which mediates electron transfer between photosystem II (PSII) and photosystem I (PSI), cyclic electron flow around PSI, and state transitions. In Synechococcus sp. (strain CC9902), this protein is Cytochrome b6-f complex subunit 7.